Here is a 515-residue protein sequence, read N- to C-terminus: 1-pyrroline-5-carboxylate dehydrogenase (515 aa).

Active-site residues include glutamate 286 and cysteine 320.

It belongs to the aldehyde dehydrogenase family. RocA subfamily.

It carries out the reaction L-glutamate 5-semialdehyde + NAD(+) + H2O = L-glutamate + NADH + 2 H(+). It participates in amino-acid degradation; L-proline degradation into L-glutamate; L-glutamate from L-proline: step 2/2. In Geobacillus thermodenitrificans (strain NG80-2), this protein is 1-pyrroline-5-carboxylate dehydrogenase.